We begin with the raw amino-acid sequence, 473 residues long: Lactate utilization protein B (473 aa).

2 4Fe-4S ferredoxin-type domains span residues 302–332 (GSEF…GHSY) and 351–380 (YDDY…LHDL). Cysteine 311, cysteine 314, cysteine 317, cysteine 321, cysteine 364, cysteine 367, and cysteine 371 together coordinate [4Fe-4S] cluster.

This sequence belongs to the LutB/YkgF family.

Functionally, is involved in L-lactate degradation and allows cells to grow with lactate as the sole carbon source. Has probably a role as an electron transporter during oxidation of L-lactate. This Bacillus anthracis (strain A0248) protein is Lactate utilization protein B.